We begin with the raw amino-acid sequence, 135 residues long: CDGSH iron-sulfur domain-containing protein 2B (135 aa).

Over 1–37 (MMLESLARVFKVQLPAYLKRLPIPDSIAGFIRLTVLE) the chain is Lumenal. A helical membrane pass occupies residues 38-60 (WLRLLPFLGVLALLGYLAIRPFL). The Cytoplasmic segment spans residues 61–135 (PKKKQQKDSL…GPLILKKKEV (75 aa)). [2Fe-2S] cluster contacts are provided by Cys99, Cys101, Cys110, and His114.

This sequence belongs to the CISD protein family. CISD2 subfamily. As to quaternary structure, homodimer. [2Fe-2S] cluster serves as cofactor.

The protein localises to the endoplasmic reticulum membrane. The protein resides in the mitochondrion outer membrane. In terms of biological role, regulator of autophagy that contributes to antagonize becn1-mediated cellular autophagy at the endoplasmic reticulum. Participates in the interaction of bcl2 with becn1 and is required for bcl2-mediated depression of endoplasmic reticulum Ca(2+) stores during autophagy. The sequence is that of CDGSH iron-sulfur domain-containing protein 2B (cisd2-b) from Xenopus laevis (African clawed frog).